The sequence spans 169 residues: Sulfopyruvate decarboxylase subunit alpha (169 aa).

This sequence belongs to the ComD family. Heterododecamer composed of 6 subunits alpha and 6 subunits beta.

The catalysed reaction is 3-sulfopyruvate + H(+) = sulfoacetaldehyde + CO2. It participates in cofactor biosynthesis; coenzyme M biosynthesis; sulfoacetaldehyde from phosphoenolpyruvate and sulfite: step 4/4. Its activity is regulated as follows. Inhibited by oxygen when heated in air at 80 degrees Celsius. The enzyme is reactivated by addition of dithionite. Functionally, involved in the biosynthesis of the coenzyme M (2-mercaptoethanesulfonic acid). Catalyzes the decarboxylation of sulfopyruvate to sulfoacetaldehyde. The polypeptide is Sulfopyruvate decarboxylase subunit alpha (Methanocaldococcus jannaschii (strain ATCC 43067 / DSM 2661 / JAL-1 / JCM 10045 / NBRC 100440) (Methanococcus jannaschii)).